Consider the following 147-residue polypeptide: Myoglobin (147 aa).

The 140-residue stretch at 2–141 (HDAELVLKCW…VIGDIDTYYK (140 aa)) folds into the Globin domain. A nitrite-binding site is contributed by histidine 60. O2 is bound at residue histidine 60. Histidine 89 contacts heme b.

Belongs to the globin family. In terms of assembly, monomeric.

It localises to the cytoplasm. The protein resides in the sarcoplasm. It carries out the reaction Fe(III)-heme b-[protein] + nitric oxide + H2O = Fe(II)-heme b-[protein] + nitrite + 2 H(+). The catalysed reaction is H2O2 + AH2 = A + 2 H2O. Its function is as follows. Monomeric heme protein which primary function is to store oxygen and facilitate its diffusion within muscle tissues. Reversibly binds oxygen through a pentacoordinated heme iron and enables its timely and efficient release as needed during periods of heightened demand. Depending on the oxidative conditions of tissues and cells, and in addition to its ability to bind oxygen, it also has a nitrite reductase activity whereby it regulates the production of bioactive nitric oxide. Under stress conditions, like hypoxia and anoxia, it also protects cells against reactive oxygen species thanks to its pseudoperoxidase activity. The polypeptide is Myoglobin (mb) (Cyprinus carpio (Common carp)).